The sequence spans 397 residues: Probable sugar efflux transporter (397 aa).

Helical transmembrane passes span 15-35 (VVTLAIAAFIFNTTEFVPVGL), 51-71 (GIMLTIYAWVVALMSLPFMLL), 81-101 (LICLFVLFIASHILSFMAWSF), 103-123 (VLVISRIGVAFAHAIFWSITA), 136-156 (AQALSLLATGTALAMVLGLPV), 170-190 (FLAIGVGAFLTLLCLIKLLPL), 209-229 (PALMSIYLLTVVVVTAHYTAY), 246-266 (FATVLLLILGGAGIIGSVIFG), 273-293 (ASVLVSVAIALLMACLLLLMP), 301-321 (LAILSIFWGIAIMMIGLGMQV), 333-353 (VAMSLFSGIFNIGIGAGALVG), and 364-384 (DIGYVGAIPAFLALVWSVIIF).

Belongs to the major facilitator superfamily. SotB (TC 2.A.1.2) family.

Its subcellular location is the cell inner membrane. Involved in the efflux of sugars. The physiological role may be the reduction of the intracellular concentration of toxic sugars or sugar metabolites. The protein is Probable sugar efflux transporter of Escherichia fergusonii (strain ATCC 35469 / DSM 13698 / CCUG 18766 / IAM 14443 / JCM 21226 / LMG 7866 / NBRC 102419 / NCTC 12128 / CDC 0568-73).